A 242-amino-acid chain; its full sequence is Probable inactive serine protease 58 (242 aa).

Positions 1 to 17 are cleaved as a signal peptide; sequence MNLILLWALLNLPVALT. A Peptidase S1 domain is found at 18-240; it reads FDPNYKDDIT…YIPWIENTIQ (223 aa). Disulfide bonds link Cys41–Cys57, Cys134–Cys202, Cys166–Cys181, and Cys192–Cys216. N-linked (GlcNAc...) asparagine glycosylation is present at Asn157.

This sequence belongs to the peptidase S1 family.

Its subcellular location is the secreted. The sequence is that of Probable inactive serine protease 58 (PRSS58) from Bos taurus (Bovine).